A 92-amino-acid chain; its full sequence is Sec-independent protein translocase protein TatA (92 aa).

Residues 2–22 form a helical membrane-spanning segment; it reads IPANFGGTELIILLVIILLLF. The tract at residues 43–92 is disordered; it reads KGTSGAYEELEEKKGEEEKDEGGKKEAEASGRGEEEQQARAAGEAGRKQG. Residues 53 to 80 are compositionally biased toward basic and acidic residues; sequence EEKKGEEEKDEGGKKEAEASGRGEEEQQ.

This sequence belongs to the TatA/E family. In terms of assembly, the Tat system comprises two distinct complexes: a TatABC complex, containing multiple copies of TatA, TatB and TatC subunits, and a separate TatA complex, containing only TatA subunits. Substrates initially bind to the TatABC complex, which probably triggers association of the separate TatA complex to form the active translocon.

It is found in the cell membrane. In terms of biological role, part of the twin-arginine translocation (Tat) system that transports large folded proteins containing a characteristic twin-arginine motif in their signal peptide across membranes. TatA could form the protein-conducting channel of the Tat system. The sequence is that of Sec-independent protein translocase protein TatA from Rubrobacter xylanophilus (strain DSM 9941 / JCM 11954 / NBRC 16129 / PRD-1).